A 116-amino-acid chain; its full sequence is Large ribosomal subunit protein bL19 (116 aa).

The protein belongs to the bacterial ribosomal protein bL19 family.

In terms of biological role, this protein is located at the 30S-50S ribosomal subunit interface and may play a role in the structure and function of the aminoacyl-tRNA binding site. This chain is Large ribosomal subunit protein bL19, found in Clostridium beijerinckii (strain ATCC 51743 / NCIMB 8052) (Clostridium acetobutylicum).